Consider the following 104-residue polypeptide: Phosphoribosyl-ATP pyrophosphatase (104 aa).

It belongs to the PRA-PH family.

Its subcellular location is the cytoplasm. The catalysed reaction is 1-(5-phospho-beta-D-ribosyl)-ATP + H2O = 1-(5-phospho-beta-D-ribosyl)-5'-AMP + diphosphate + H(+). Its pathway is amino-acid biosynthesis; L-histidine biosynthesis; L-histidine from 5-phospho-alpha-D-ribose 1-diphosphate: step 2/9. The polypeptide is Phosphoribosyl-ATP pyrophosphatase (Methanoregula boonei (strain DSM 21154 / JCM 14090 / 6A8)).